The sequence spans 128 residues: Small ribosomal subunit protein uS9 (128 aa).

It belongs to the universal ribosomal protein uS9 family.

The polypeptide is Small ribosomal subunit protein uS9 (Flavobacterium psychrophilum (strain ATCC 49511 / DSM 21280 / CIP 103535 / JIP02/86)).